A 115-amino-acid polypeptide reads, in one-letter code: Ribonuclease P protein component (115 aa).

Belongs to the RnpA family. Consists of a catalytic RNA component (M1 or rnpB) and a protein subunit.

The catalysed reaction is Endonucleolytic cleavage of RNA, removing 5'-extranucleotides from tRNA precursor.. RNaseP catalyzes the removal of the 5'-leader sequence from pre-tRNA to produce the mature 5'-terminus. It can also cleave other RNA substrates such as 4.5S RNA. The protein component plays an auxiliary but essential role in vivo by binding to the 5'-leader sequence and broadening the substrate specificity of the ribozyme. This chain is Ribonuclease P protein component, found in Bacillus cereus (strain AH187).